A 103-amino-acid polypeptide reads, in one-letter code: Cell division protein CrgA (103 aa).

Transmembrane regions (helical) follow at residues 49–69 (FVPL…VYYL) and 80–100 (IGAW…LMTM).

It belongs to the CrgA family.

It localises to the cell membrane. Its function is as follows. Involved in cell division. In Bifidobacterium longum (strain NCC 2705), this protein is Cell division protein CrgA.